The primary structure comprises 381 residues: Neutral protease 2 homolog mep20 (381 aa).

An N-terminal signal peptide occupies residues 1–19 (MRFTALASAILPLACNVLA). Residues 20–193 (LPAKTGEAPK…ASAVKPLDKR (174 aa)) constitute a propeptide that is removed on maturation. Disulfide bonds link Cys-199/Cys-271 and Cys-278/Cys-296. His-321 is a Zn(2+) binding site. Glu-322 is an active-site residue. Zn(2+)-binding residues include His-325 and Asp-336.

The protein belongs to the peptidase M35 family. Zn(2+) is required as a cofactor.

It carries out the reaction Preferential cleavage of bonds with hydrophobic residues in P1'. Also 3-Asn-|-Gln-4 and 8-Gly-|-Ser-9 bonds in insulin B chain.. Its function is as follows. Secreted metalloproteinase that allows assimilation of proteinaceous substrates. Shows high activities on basic nuclear substrates such as histone and protamine. In Aspergillus flavus, this protein is Neutral protease 2 homolog mep20 (mep20).